Reading from the N-terminus, the 997-residue chain is Kinesin-like protein KIF19 (997 aa).

The Kinesin motor domain occupies 11-346 (QLTVALRIRP…LTYADRAKNI (336 aa)). 104–111 (GPTGCGKT) is a binding site for ATP. A coiled-coil region spans residues 360 to 437 (HIAQYTSIIS…REQMDIRRQL (78 aa)). Basic and acidic residues predominate over residues 468–491 (RARKWRDEHRKETYGKDDSEKDSD). A disordered region spans residues 468-503 (RARKWRDEHRKETYGKDDSEKDSDTGDDQSDFIEPP). A coiled-coil region spans residues 508-577 (ARETIQILEG…ELEIENTEMQ (70 aa)). Disordered regions lie at residues 662–690 (NLTAEENLQEPDSDQESVRTFGSDNRNPI), 792–811 (GDRLQPMKERSNLSVHSMSE), and 848–890 (GGGS…SRSF). Composition is skewed to basic and acidic residues over residues 792 to 802 (GDRLQPMKERS) and 869 to 880 (QKLEKREESLEV). A coiled-coil region spans residues 861-889 (HRTQKKQAQKLEKREESLEVKRRKKRSRS).

It belongs to the TRAFAC class myosin-kinesin ATPase superfamily. Kinesin family.

The protein resides in the cytoplasm. It is found in the cytoskeleton. It localises to the cell projection. Its subcellular location is the cilium. Plus end-directed microtubule-dependent motor protein that regulates the length of motile cilia by mediating depolymerization of microtubules at ciliary tips. The sequence is that of Kinesin-like protein KIF19 (kif19) from Xenopus laevis (African clawed frog).